We begin with the raw amino-acid sequence, 693 residues long: Heat shock protein homolog SSE1 (693 aa).

Ser2 is modified (N-acetylserine). Lys195 participates in a covalent cross-link: Glycyl lysine isopeptide (Lys-Gly) (interchain with G-Cter in ubiquitin). Thr242 is modified (phosphothreonine). Residues 653–693 (IRSKQEASQMAAMAEKLAAQRKAEAEKKEEKKDTEGDVDMD) form a disordered region. Residue Ser660 is modified to Phosphoserine. Positions 673–687 (RKAEAEKKEEKKDTE) are enriched in basic and acidic residues.

The protein belongs to the heat shock protein 70 family.

It localises to the cytoplasm. Functionally, has a calcium-dependent calmodulin-binding activity. Required for normal growth at various temperatures. This Saccharomyces cerevisiae (strain ATCC 204508 / S288c) (Baker's yeast) protein is Heat shock protein homolog SSE1 (SSE1).